The primary structure comprises 457 residues: MDHLPIFCQLRDRDCLIVGGGDVAERKARLLLDAGARLTVNALAFIPQFTAWADAGMLTLVEGPFDESLLDTCWLAIAATDDDALNQRVSEAAEARRIFCNVVDAPKAASFIMPSIIDRSPLMVAVSSGGTSPVLARLLREKLESLLPLHLGQVAKYAGQLRGRVKQQFATMGERRRFWEKLFVNDRLAQSLANNDQKAITETTEQLINEPLDHRGEVVLVGAGPGDAGLLTLKGLQQIQQADVVVYDRLVSDDIMNLVRRDADRVFVGKRAGYHCVPQEEINQILLREAQKGKRVVRLKGGDPFIFGRGGEELETLCNAGIPFSVVPGITAASGCSAYSGIPLTHRDYAQSVRLITGHLKTGGELDWENLAAEKQTLVFYMGLNQAATIQQKLIEYGMPGEMPVAIVENGTAVTQRVIDGTLTQLGELAQQMNSPSLIIIGRVVGLRDKLNWFSNH.

The tract at residues 1–204 is precorrin-2 dehydrogenase /sirohydrochlorin ferrochelatase; sequence MDHLPIFCQL…NDQKAITETT (204 aa). NAD(+) is bound by residues 22–23 and 43–44; these read DV and LA. At serine 128 the chain carries Phosphoserine. The interval 216-457 is uroporphyrinogen-III C-methyltransferase; the sequence is GEVVLVGAGP…RDKLNWFSNH (242 aa). S-adenosyl-L-methionine is bound at residue proline 225. Aspartate 248 (proton acceptor) is an active-site residue. The Proton donor role is filled by lysine 270. S-adenosyl-L-methionine-binding positions include 301 to 303, isoleucine 306, 331 to 332, methionine 382, and glycine 411; these read GGD and TA.

In the N-terminal section; belongs to the precorrin-2 dehydrogenase / sirohydrochlorin ferrochelatase family. The protein in the C-terminal section; belongs to the precorrin methyltransferase family.

The catalysed reaction is uroporphyrinogen III + 2 S-adenosyl-L-methionine = precorrin-2 + 2 S-adenosyl-L-homocysteine + H(+). It catalyses the reaction precorrin-2 + NAD(+) = sirohydrochlorin + NADH + 2 H(+). It carries out the reaction siroheme + 2 H(+) = sirohydrochlorin + Fe(2+). It participates in cofactor biosynthesis; adenosylcobalamin biosynthesis; precorrin-2 from uroporphyrinogen III: step 1/1. The protein operates within cofactor biosynthesis; adenosylcobalamin biosynthesis; sirohydrochlorin from precorrin-2: step 1/1. Its pathway is porphyrin-containing compound metabolism; siroheme biosynthesis; precorrin-2 from uroporphyrinogen III: step 1/1. It functions in the pathway porphyrin-containing compound metabolism; siroheme biosynthesis; siroheme from sirohydrochlorin: step 1/1. It participates in porphyrin-containing compound metabolism; siroheme biosynthesis; sirohydrochlorin from precorrin-2: step 1/1. Functionally, multifunctional enzyme that catalyzes the SAM-dependent methylations of uroporphyrinogen III at position C-2 and C-7 to form precorrin-2 via precorrin-1. Then it catalyzes the NAD-dependent ring dehydrogenation of precorrin-2 to yield sirohydrochlorin. Finally, it catalyzes the ferrochelation of sirohydrochlorin to yield siroheme. The chain is Siroheme synthase from Escherichia coli O6:H1 (strain CFT073 / ATCC 700928 / UPEC).